Here is a 457-residue protein sequence, read N- to C-terminus: Chromosomal replication initiator protein DnaA (457 aa).

The domain I, interacts with DnaA modulators stretch occupies residues 1–73 (MANNYQTLYD…SKYLSEEFKK (73 aa)). The segment at 73–108 (KENIVNFEFIIDNEKLLINSNFLIKETNIKNRFNFS) is domain II. A domain III, AAA+ region region spans residues 109 to 331 (DELLRYNFNN…GNLKQICFWA (223 aa)). Positions 156, 158, 159, and 160 each coordinate ATP. The tract at residues 332–457 (DNDTNKDLII…LQINLIINKF (126 aa)) is domain IV, binds dsDNA.

This sequence belongs to the DnaA family. In terms of assembly, oligomerizes as a right-handed, spiral filament on DNA at oriC.

It localises to the cytoplasm. In terms of biological role, plays an essential role in the initiation and regulation of chromosomal replication. ATP-DnaA binds to the origin of replication (oriC) to initiate formation of the DNA replication initiation complex once per cell cycle. Binds the DnaA box (a 9 base pair repeat at the origin) and separates the double-stranded (ds)DNA. Forms a right-handed helical filament on oriC DNA; dsDNA binds to the exterior of the filament while single-stranded (ss)DNA is stabiized in the filament's interior. The ATP-DnaA-oriC complex binds and stabilizes one strand of the AT-rich DNA unwinding element (DUE), permitting loading of DNA polymerase. After initiation quickly degrades to an ADP-DnaA complex that is not apt for DNA replication. Binds acidic phospholipids. The polypeptide is Chromosomal replication initiator protein DnaA (Ureaplasma parvum serovar 3 (strain ATCC 700970)).